Consider the following 94-residue polypeptide: MKYQPLYDRVLVEPIQNDEAHGKILIPDTAKEKPTEGIVVMVGGGYRNDKGDITPLKVKKGDTIVYTKWAGTEIKLESKDYVVIKESDILLVKS.

The protein belongs to the GroES chaperonin family. Heptamer of 7 subunits arranged in a ring. Interacts with the chaperonin GroEL.

The protein resides in the cytoplasm. In terms of biological role, together with the chaperonin GroEL, plays an essential role in assisting protein folding. The GroEL-GroES system forms a nano-cage that allows encapsulation of the non-native substrate proteins and provides a physical environment optimized to promote and accelerate protein folding. GroES binds to the apical surface of the GroEL ring, thereby capping the opening of the GroEL channel. This Orientia tsutsugamushi (Rickettsia tsutsugamushi) protein is Co-chaperonin GroES.